A 1047-amino-acid chain; its full sequence is Formin-like protein 3 (1047 aa).

Glycine 2 carries the N-myristoyl glycine lipid modification. Positions valine 22 to glutamate 462 constitute a GBD/FH3 domain. Residues alanine 520–proline 561 form a disordered region. The span at alanine 527 to proline 546 shows a compositional bias: pro residues. The FH2 domain maps to isoleucine 580 to alanine 970. The region spanning aspartate 1000–cysteine 1037 is the DAD domain.

Belongs to the formin homology family.

Its subcellular location is the cytoplasm. The protein localises to the cell membrane. Required for developmental angiogenesis, but not for vasculogenesis. In Danio rerio (Zebrafish), this protein is Formin-like protein 3 (fmnl3).